We begin with the raw amino-acid sequence, 274 residues long: Large ribosomal subunit protein uL2 (274 aa).

The disordered stretch occupies residues 1 to 23 (MAIKIYRPTSPGRRHHSVSSFEE).

It belongs to the universal ribosomal protein uL2 family. As to quaternary structure, part of the 50S ribosomal subunit. Forms a bridge to the 30S subunit in the 70S ribosome.

In terms of biological role, one of the primary rRNA binding proteins. Required for association of the 30S and 50S subunits to form the 70S ribosome, for tRNA binding and peptide bond formation. It has been suggested to have peptidyltransferase activity; this is somewhat controversial. Makes several contacts with the 16S rRNA in the 70S ribosome. The polypeptide is Large ribosomal subunit protein uL2 (Dehalococcoides mccartyi (strain ATCC BAA-2100 / JCM 16839 / KCTC 5957 / BAV1)).